The primary structure comprises 300 residues: Protoheme IX farnesyltransferase (300 aa).

The next 9 membrane-spanning stretches (helical) occupy residues 24–44 (VTQLAVFCAVIGMFLATPGMV), 46–66 (WHVLIGGTVGIWLLAGAAFAI), 94–114 (PQILIFSAVLGSVGAWTLYTF), 118–138 (LTMWLTIATFVGYAVIYTLLL), 146–166 (IVIGGASGAMPPALGWAAVTG), 172–192 (AWILVLIIFVWTPPHFWVLAL), 217–237 (LHILLYTVILFAVTLMPFISG), 239–259 (SGAVYLTSAVLLGAVFLAYAW), and 278–298 (IVYLSLLFAALLVDHYARPLL).

It belongs to the UbiA prenyltransferase family. Protoheme IX farnesyltransferase subfamily.

The protein resides in the cell inner membrane. It carries out the reaction heme b + (2E,6E)-farnesyl diphosphate + H2O = Fe(II)-heme o + diphosphate. The protein operates within porphyrin-containing compound metabolism; heme O biosynthesis; heme O from protoheme: step 1/1. Its function is as follows. Converts heme B (protoheme IX) to heme O by substitution of the vinyl group on carbon 2 of heme B porphyrin ring with a hydroxyethyl farnesyl side group. The sequence is that of Protoheme IX farnesyltransferase from Burkholderia lata (strain ATCC 17760 / DSM 23089 / LMG 22485 / NCIMB 9086 / R18194 / 383).